Reading from the N-terminus, the 20-residue chain is Citrate synthase (20 aa).

Belongs to the citrate synthase family. As to quaternary structure, homohexamer.

It catalyses the reaction oxaloacetate + acetyl-CoA + H2O = citrate + CoA + H(+). It participates in carbohydrate metabolism; tricarboxylic acid cycle; isocitrate from oxaloacetate: step 1/2. Allosterically inhibited by NADH. The polypeptide is Citrate synthase (gltA) (Streptomyces hygroscopicus).